Reading from the N-terminus, the 251-residue chain is Ubiquinone biosynthesis O-methyltransferase (251 aa).

Residues Arg36, Gly61, Asp82, and Ile124 each contribute to the S-adenosyl-L-methionine site.

Belongs to the methyltransferase superfamily. UbiG/COQ3 family.

It catalyses the reaction a 3-demethylubiquinol + S-adenosyl-L-methionine = a ubiquinol + S-adenosyl-L-homocysteine + H(+). It carries out the reaction a 3-(all-trans-polyprenyl)benzene-1,2-diol + S-adenosyl-L-methionine = a 2-methoxy-6-(all-trans-polyprenyl)phenol + S-adenosyl-L-homocysteine + H(+). It functions in the pathway cofactor biosynthesis; ubiquinone biosynthesis. O-methyltransferase that catalyzes the 2 O-methylation steps in the ubiquinone biosynthetic pathway. The protein is Ubiquinone biosynthesis O-methyltransferase of Rickettsia akari (strain Hartford).